Consider the following 103-residue polypeptide: UPF0145 protein BCE33L0904 (103 aa).

The protein belongs to the UPF0145 family.

This Bacillus cereus (strain ZK / E33L) protein is UPF0145 protein BCE33L0904.